Here is a 382-residue protein sequence, read N- to C-terminus: Transcription termination/antitermination protein NusA (382 aa).

One can recognise an S1 motif domain in the interval 135 to 199 (EDIMTGIVQR…KGPQIMISRT (65 aa)). In terms of domain architecture, KH spans 301–367 (EKTTQVIVPD…TLALDQETAD (67 aa)). Residues 348–382 (LLEDEAASHETLALDQETADQPEATVETSKNHEEE) form a disordered region.

It belongs to the NusA family. In terms of assembly, monomer. Binds directly to the core enzyme of the DNA-dependent RNA polymerase and to nascent RNA.

It localises to the cytoplasm. Its function is as follows. Participates in both transcription termination and antitermination. This Halalkalibacterium halodurans (strain ATCC BAA-125 / DSM 18197 / FERM 7344 / JCM 9153 / C-125) (Bacillus halodurans) protein is Transcription termination/antitermination protein NusA.